The following is a 370-amino-acid chain: mRNA cap guanine-N(7) methyltransferase 1 (370 aa).

Low complexity predominate over residues 1-11 (MKRGFSDSPSS). The tract at residues 1–34 (MKRGFSDSPSSSAPPPSSRFKSNPEGDSQFLEDE) is disordered. The region spanning 61–341 (SPIIHLKKLN…LYLSFVLRKR (281 aa)) is the mRNA cap 0 methyltransferase domain. 70–71 (NN) contacts mRNA. S-adenosyl-L-methionine contacts are provided by residues K74, A92, D114, 150-151 (DC), and 172-174 (QFA).

This sequence belongs to the class I-like SAM-binding methyltransferase superfamily. mRNA cap 0 methyltransferase family.

It is found in the nucleus. The catalysed reaction is a 5'-end (5'-triphosphoguanosine)-ribonucleoside in mRNA + S-adenosyl-L-methionine = a 5'-end (N(7)-methyl 5'-triphosphoguanosine)-ribonucleoside in mRNA + S-adenosyl-L-homocysteine. MRNA-capping methyltransferase that methylates the N7 position of the added guanosine to the 5'-cap structure of mRNAs. Binds RNA containing 5'-terminal GpppC. The polypeptide is mRNA cap guanine-N(7) methyltransferase 1 (Arabidopsis thaliana (Mouse-ear cress)).